Here is a 437-residue protein sequence, read N- to C-terminus: GTPase Obg (437 aa).

Residues 2–161 (SDFIDRALIT…RELQLELKVI (160 aa)) form the Obg domain. In terms of domain architecture, OBG-type G spans 162–335 (ADVGLVGFPN…LQRRIVDILR (174 aa)). GTP contacts are provided by residues 168–175 (GFPNAGKS), 193–197 (FTTLS), 214–217 (DIPG), 284–287 (NKTD), and 316–318 (SAA). Positions 175 and 195 each coordinate Mg(2+). One can recognise an OCT domain in the interval 355-433 (FSNIDPNDFW…IEKAELLWQD (79 aa)).

This sequence belongs to the TRAFAC class OBG-HflX-like GTPase superfamily. OBG GTPase family. In terms of assembly, monomer. The cofactor is Mg(2+).

The protein resides in the cytoplasm. Its function is as follows. An essential GTPase which binds GTP, GDP and possibly (p)ppGpp with moderate affinity, with high nucleotide exchange rates and a fairly low GTP hydrolysis rate. Plays a role in control of the cell cycle, stress response, ribosome biogenesis and in those bacteria that undergo differentiation, in morphogenesis control. The sequence is that of GTPase Obg from Herpetosiphon aurantiacus (strain ATCC 23779 / DSM 785 / 114-95).